We begin with the raw amino-acid sequence, 1379 residues long: DNA-directed RNA polymerase subunit beta'' (1379 aa).

4 residues coordinate Zn(2+): Cys-220, Cys-293, Cys-300, and Cys-303.

Belongs to the RNA polymerase beta' chain family. RpoC2 subfamily. In terms of assembly, in plastids the minimal PEP RNA polymerase catalytic core is composed of four subunits: alpha, beta, beta', and beta''. When a (nuclear-encoded) sigma factor is associated with the core the holoenzyme is formed, which can initiate transcription. The cofactor is Zn(2+).

It is found in the plastid. Its subcellular location is the chloroplast. The enzyme catalyses RNA(n) + a ribonucleoside 5'-triphosphate = RNA(n+1) + diphosphate. Its function is as follows. DNA-dependent RNA polymerase catalyzes the transcription of DNA into RNA using the four ribonucleoside triphosphates as substrates. In Crucihimalaya wallichii (Rock-cress), this protein is DNA-directed RNA polymerase subunit beta''.